A 185-amino-acid chain; its full sequence is Elongation factor P (185 aa).

It belongs to the elongation factor P family.

Its subcellular location is the cytoplasm. It functions in the pathway protein biosynthesis; polypeptide chain elongation. Involved in peptide bond synthesis. Stimulates efficient translation and peptide-bond synthesis on native or reconstituted 70S ribosomes in vitro. Probably functions indirectly by altering the affinity of the ribosome for aminoacyl-tRNA, thus increasing their reactivity as acceptors for peptidyl transferase. The sequence is that of Elongation factor P from Acaryochloris marina (strain MBIC 11017).